Consider the following 176-residue polypeptide: Large ribosomal subunit protein uL6 (176 aa).

This sequence belongs to the universal ribosomal protein uL6 family. Part of the 50S ribosomal subunit.

Its function is as follows. This protein binds to the 23S rRNA, and is important in its secondary structure. It is located near the subunit interface in the base of the L7/L12 stalk, and near the tRNA binding site of the peptidyltransferase center. The chain is Large ribosomal subunit protein uL6 from Lactobacillus delbrueckii subsp. bulgaricus (strain ATCC 11842 / DSM 20081 / BCRC 10696 / JCM 1002 / NBRC 13953 / NCIMB 11778 / NCTC 12712 / WDCM 00102 / Lb 14).